The following is an 847-amino-acid chain: MSRYDPAATESRWQAAWDAAGVFTARHDPARPKYYVLEMFPYPSGRIHMGHVRNYTMGDVVARQKAAAGFSVLHPMGWDAFGMPAENAAMERGGHPKDWTYGNIADMRAQMKPLGLSIDWSREFATCDPEYYGQQQAMFIDMMEAGLVYRKNAVVNWDPVDMTVLANEQVIDGKGWRSGAPVVRRELTQWFFRISDYAGELLEALDTLKDWPEKVRLMQANWIGQSRGLQFAFSMAGAPEGFDRLEVYTTRPDTLMGASFAAISPDHPLARHLERHDAEVAEFVAECRRVGTSEEALEKAEKKGFDTGLRVRHPFDTAWELPVYIANFILMDYGTGAIFGCPAHDQRDFEFATKYGLPIRPVFLPEDTEETALAEAFVPMKSERVHYIRGFAGAEVQTGEEGVAAAIDFCESQGVGRGVTNYRLRDWGISRQRYWGCPIPVIHCETCGVVPEAKENLPVRLPDDVSFDVPGNPLDRHPTWRDCTCPKCGAKARRETDTMDTFVDSSWYYARFTAPRAATPTDAEEADYWMNVDQYIGGIEHAILHLLYSRFFARAMQKTGHLPAKAIEPFNALFTQGMVTHEIYLTRDAAGRPVYHLPEDVTDGRLADGTPVEIIPSAKMSKSKKNVVDPMNIIRQFGADTARWFVMSDSPPERDVEWTASGAEAASKHLHRVWRLADEISRADGEANAEDGALDKATARAIAEVTQGVEGFAFNKAIAKLYEFTNTLSRSGAGAEAKKRAMRTMAQLMSPMVPHLAEEVWAMLGGEGLVAQAAWPKADPALLIDDTVTLPIQVNGKRRGEITVPKEMAASEVEKLVLADEAVQRALGGAAPKKLIVVPGRIVNVVI.

A 'HIGH' region motif is present at residues 41–51; sequence PYPSGRIHMGH. Residues 619–623 carry the 'KMSKS' region motif; sequence KMSKS. Residue Lys622 participates in ATP binding.

It belongs to the class-I aminoacyl-tRNA synthetase family.

It localises to the cytoplasm. It catalyses the reaction tRNA(Leu) + L-leucine + ATP = L-leucyl-tRNA(Leu) + AMP + diphosphate. The sequence is that of Leucine--tRNA ligase from Cereibacter sphaeroides (strain ATCC 17029 / ATH 2.4.9) (Rhodobacter sphaeroides).